A 1091-amino-acid chain; its full sequence is E3 ubiquitin-protein ligase TRIM33 (1091 aa).

The segment covering 1-13 has biased composition (gly residues); sequence MADNKGGGGGGGE. The segment at 1–87 is disordered; that stretch reads MADNKGGGGG…SATPASSSSS (87 aa). Positions 52-87 are enriched in low complexity; sequence APVAAVPTDTPAEENPAPSSSSVASSSATPASSSSS. The RING-type 1 zinc finger occupies 97–154; that stretch reads CAVCKLSLQSRDTEPKLLPCLHSFCRRCLPEPERQLSVPGGTNGDIQQVGVIRCLVCR. The segment at 180-227 adopts a B box-type 1; atypical zinc-finger fold; it reads KSEQVCTSCEDNASAVGFCVECGEWLCKTCIEAHQRVKFTKDHIITNK. 8 residues coordinate Zn(2+): cysteine 185, cysteine 188, cysteine 209, histidine 213, cysteine 245, histidine 248, cysteine 268, and histidine 273. The B box-type 2 zinc-finger motif lies at 240-281; that stretch reads QRPVFCPVHKQEQLKLFCETCDRLTCRDCQLLEHKEHRYQFL. Residues 269–361 adopt a coiled-coil conformation; that stretch reads QLLEHKEHRY…QLESVTKERQ (93 aa). Disordered regions lie at residues 672–779 and 821–844; these read LPQP…TPPL and GKSA…GSNK. Low complexity predominate over residues 675–721; that stretch reads PTSNMNPSPAPSAMSPGSTGLSNSHTPVRPPSTSSTGSRGSCGSSSR. The span at 754–763 shows a compositional bias: basic and acidic residues; it reads KQEKAEDGRR. Over residues 768–779 the composition is skewed to low complexity; that stretch reads LSSPESSLTPPL. The PHD-type zinc finger occupies 850–897; sequence EDWCAVCQNGGDLLCCEKCPKVFHLTCHVPTLLSFPSGEWICTFCRDL. The Bromo domain occupies 920–1043; sequence GLSPVDQMKC…LYFEEKLPAI (124 aa). Positions 1051-1091 are disordered; it reads PLPEFEAEDDDGDVTDDSDDDDFVQPRRKRLKSEERPVHIK. Positions 1055–1073 are enriched in acidic residues; the sequence is FEAEDDDGDVTDDSDDDDF. Basic and acidic residues predominate over residues 1082 to 1091; it reads KSEERPVHIK.

May interact with smad4.

The protein resides in the nucleus. The enzyme catalyses S-ubiquitinyl-[E2 ubiquitin-conjugating enzyme]-L-cysteine + [acceptor protein]-L-lysine = [E2 ubiquitin-conjugating enzyme]-L-cysteine + N(6)-ubiquitinyl-[acceptor protein]-L-lysine.. It participates in protein modification; protein ubiquitination. Its function is as follows. Acts as an E3 ubiquitin-protein ligase for smad4. Promotes ectoderm embryonic development at the expense of other germ layers. Inhibits mesodermal differentiation. Promotes neural development of the ectoderm. Promotes smad4 alpha degradation via the ubiquitin proteasome pathway. May act as a transcriptional repressor. The chain is E3 ubiquitin-protein ligase TRIM33 (trim33) from Xenopus laevis (African clawed frog).